The following is a 640-amino-acid chain: UvrABC system protein C (640 aa).

The 80-residue stretch at 22-101 (NDPGCYLMKD…IKSHQPYFNV (80 aa)) folds into the GIY-YIG domain. Residues 211–246 (DELRILLEKQMISFSESLKFEEAGSVRDQLKGIDRL) form the UVR domain.

The protein belongs to the UvrC family. Interacts with UvrB in an incision complex.

The protein localises to the cytoplasm. In terms of biological role, the UvrABC repair system catalyzes the recognition and processing of DNA lesions. UvrC both incises the 5' and 3' sides of the lesion. The N-terminal half is responsible for the 3' incision and the C-terminal half is responsible for the 5' incision. The sequence is that of UvrABC system protein C from Prochlorococcus marinus (strain NATL1A).